The chain runs to 359 residues: 3-dehydroquinate synthase (359 aa).

Residues 69–74, 103–107, 127–128, Lys-140, and Lys-149 each bind NAD(+); these read DAEDGK, GAVTD, and TT. Residues Glu-182, His-244, and His-260 each coordinate Zn(2+).

This sequence belongs to the sugar phosphate cyclases superfamily. Dehydroquinate synthase family. It depends on NAD(+) as a cofactor. Co(2+) is required as a cofactor. Requires Zn(2+) as cofactor.

The protein resides in the cytoplasm. It catalyses the reaction 7-phospho-2-dehydro-3-deoxy-D-arabino-heptonate = 3-dehydroquinate + phosphate. It functions in the pathway metabolic intermediate biosynthesis; chorismate biosynthesis; chorismate from D-erythrose 4-phosphate and phosphoenolpyruvate: step 2/7. In terms of biological role, catalyzes the conversion of 3-deoxy-D-arabino-heptulosonate 7-phosphate (DAHP) to dehydroquinate (DHQ). The protein is 3-dehydroquinate synthase of Corynebacterium pseudotuberculosis (strain C231).